Reading from the N-terminus, the 308-residue chain is uncharacterized protein (308 aa).

Positions 1–19 (MKLLLILILIINNYNLCLS) are cleaved as a signal peptide. N-linked (GlcNAc...) asparagine glycosylation is found at asparagine 25 and asparagine 300.

It localises to the secreted. This is an uncharacterized protein from Dictyostelium discoideum (Social amoeba).